A 383-amino-acid polypeptide reads, in one-letter code: MTLPVWVAAAARAATEALLGRPFSASQLLELPDRDEPLAVSVTSAAVLAGGEQALAISHCDPGSGLDLTRGLEIWVCVQWQELVDDELNVHSEAWLNLLAGKGVGTLGSGGEACVSRFARELLSRNLYPLVPSGRGLQLEVVLPRGRDLAARTSNAAFGVVDGLALIGTQADVQVSASPDQLQQTIEQLRRQSAASDFCGAMTLVIGENGLDLARQLGLAAQPLLKIGNWLGPVIVAAAEAGVEQLLLLGYHGKLVKLAGGIFHTHHHLADGRLEVLAAMAVREGLPLDLIRQLGQADSMEAALKMLEAQDPELVRKLWYRLAVTVEHRSAAYLARYGSWSIAIGAALFDRQRRLRWAGPQGSQQLAVLGVTPEDSPISLSLP.

This sequence belongs to the CbiD family.

The enzyme catalyses Co-precorrin-5B + S-adenosyl-L-methionine = Co-precorrin-6A + S-adenosyl-L-homocysteine. It participates in cofactor biosynthesis; adenosylcobalamin biosynthesis; cob(II)yrinate a,c-diamide from sirohydrochlorin (anaerobic route): step 6/10. Catalyzes the methylation of C-1 in cobalt-precorrin-5B to form cobalt-precorrin-6A. The chain is Cobalt-precorrin-5B C(1)-methyltransferase from Prochlorococcus marinus (strain MIT 9313).